The chain runs to 313 residues: Protein PHOSPHATE-INDUCED 1 (313 aa).

The signal sequence occupies residues 1 to 22; sequence MATSHFILKLFLVISFCNVCFA. N-linked (GlcNAc...) asparagine glycosylation is present at Asn-119.

It belongs to the EXORDIUM family.

The protein resides in the secreted. Its subcellular location is the extracellular space. The protein localises to the apoplast. Functionally, may be involved in the regulation of cell division. The protein is Protein PHOSPHATE-INDUCED 1 of Nicotiana tabacum (Common tobacco).